Here is a 300-residue protein sequence, read N- to C-terminus: uncharacterized protein (300 aa).

The active-site Proton acceptor is His274.

It belongs to the AB hydrolase superfamily. In terms of assembly, monomer.

It catalyses the reaction a carboxylic ester + H2O = an alcohol + a carboxylate + H(+). This is an uncharacterized protein from Bacillus subtilis (strain 168).